Consider the following 331-residue polypeptide: Biotin synthase (331 aa).

Positions 52–281 constitute a Radical SAM core domain; sequence FFQNKVKLNM…TKEIRVSGGR (230 aa). Positions 70, 74, and 77 each coordinate [4Fe-4S] cluster. C114, C146, C206, and R276 together coordinate [2Fe-2S] cluster.

It belongs to the radical SAM superfamily. Biotin synthase family. In terms of assembly, homodimer. [4Fe-4S] cluster is required as a cofactor. [2Fe-2S] cluster serves as cofactor.

It carries out the reaction (4R,5S)-dethiobiotin + (sulfur carrier)-SH + 2 reduced [2Fe-2S]-[ferredoxin] + 2 S-adenosyl-L-methionine = (sulfur carrier)-H + biotin + 2 5'-deoxyadenosine + 2 L-methionine + 2 oxidized [2Fe-2S]-[ferredoxin]. The protein operates within cofactor biosynthesis; biotin biosynthesis; biotin from 7,8-diaminononanoate: step 2/2. Catalyzes the conversion of dethiobiotin (DTB) to biotin by the insertion of a sulfur atom into dethiobiotin via a radical-based mechanism. The chain is Biotin synthase from Bacillus pumilus (strain SAFR-032).